Reading from the N-terminus, the 325-residue chain is Putative HTH-type transcriptional regulatory protein HQ_3058A (325 aa).

One can recognise an HTH cro/C1-type domain in the interval 132-186 (LADEREERGWSLGRLATELGVSRRTVSKYEDGMNASIEIAIQLEEVFDEPFSSPL). The segment at residues 143–162 (LGRLATELGVSRRTVSKYED) is a DNA-binding region (H-T-H motif). The disordered stretch occupies residues 189–211 (MEGAESVRDSEPTPDDPDPDADD). Residues 200–211 (PTPDDPDPDADD) are compositionally biased toward acidic residues.

This chain is Putative HTH-type transcriptional regulatory protein HQ_3058A, found in Haloquadratum walsbyi (strain DSM 16790 / HBSQ001).